Here is a 335-residue protein sequence, read N- to C-terminus: Phosphate acyltransferase (335 aa).

The protein belongs to the PlsX family. As to quaternary structure, homodimer. Probably interacts with PlsY.

It localises to the cytoplasm. The catalysed reaction is a fatty acyl-[ACP] + phosphate = an acyl phosphate + holo-[ACP]. Its pathway is lipid metabolism; phospholipid metabolism. Its function is as follows. Catalyzes the reversible formation of acyl-phosphate (acyl-PO(4)) from acyl-[acyl-carrier-protein] (acyl-ACP). This enzyme utilizes acyl-ACP as fatty acyl donor, but not acyl-CoA. This chain is Phosphate acyltransferase, found in Alkaliphilus oremlandii (strain OhILAs) (Clostridium oremlandii (strain OhILAs)).